Consider the following 370-residue polypeptide: Probable trehalose-phosphate phosphatase 6 (370 aa).

The protein belongs to the trehalose phosphatase family. A divalent metal cation serves as cofactor.

The enzyme catalyses alpha,alpha-trehalose 6-phosphate + H2O = alpha,alpha-trehalose + phosphate. The protein operates within glycan biosynthesis; trehalose biosynthesis. Its function is as follows. Removes the phosphate from trehalose 6-phosphate to produce free trehalose. Trehalose accumulation in plant may improve abiotic stress tolerance. This chain is Probable trehalose-phosphate phosphatase 6 (TPP6), found in Oryza sativa subsp. japonica (Rice).